The chain runs to 265 residues: Ribosomal RNA small subunit methyltransferase A (265 aa).

Residues His13, Leu15, Gly40, Glu61, Asp85, and Asn103 each coordinate S-adenosyl-L-methionine.

It belongs to the class I-like SAM-binding methyltransferase superfamily. rRNA adenine N(6)-methyltransferase family. RsmA subfamily.

The protein localises to the cytoplasm. The enzyme catalyses adenosine(1518)/adenosine(1519) in 16S rRNA + 4 S-adenosyl-L-methionine = N(6)-dimethyladenosine(1518)/N(6)-dimethyladenosine(1519) in 16S rRNA + 4 S-adenosyl-L-homocysteine + 4 H(+). Its function is as follows. Specifically dimethylates two adjacent adenosines (A1518 and A1519) in the loop of a conserved hairpin near the 3'-end of 16S rRNA in the 30S particle. May play a critical role in biogenesis of 30S subunits. The protein is Ribosomal RNA small subunit methyltransferase A of Bordetella pertussis (strain Tohama I / ATCC BAA-589 / NCTC 13251).